A 548-amino-acid polypeptide reads, in one-letter code: Probable malate:quinone oxidoreductase (548 aa).

The protein belongs to the MQO family. The cofactor is FAD.

It carries out the reaction (S)-malate + a quinone = a quinol + oxaloacetate. It participates in carbohydrate metabolism; tricarboxylic acid cycle; oxaloacetate from (S)-malate (quinone route): step 1/1. This is Probable malate:quinone oxidoreductase from Escherichia coli O127:H6 (strain E2348/69 / EPEC).